The sequence spans 248 residues: MAAITSWITDSGCKDHASLVSIAKLAEQAERYEDMAVAMKTIAEMGNELNNEERNLLSVAYKNVVGARRSSWRIMSSIAKKQAGTPLADQTDIYLKKVEEELTKICNDVLALLSKNLITEKIGAEAKIFYYKMMGDYYRYLAEVQEGEQNDKSTEAAEEAYQKATSLAEAELSVTHPIRLGLALNFSVFYYEIKNMPEKACSLAKAAFDAAITEVDSIKDETYKDSTLIMQLLRDNLTLWNSECETDS.

It belongs to the 14-3-3 family.

This is 14-3-3 protein homolog 2 from Echinococcus multilocularis (Fox tapeworm).